Reading from the N-terminus, the 242-residue chain is Polycomb group RING finger protein 3 (242 aa).

The segment at 17-56 (CRLCSGYLIDATTVTECLHTFCRSCLVKYLEENNTCPTCR) adopts an RING-type zinc-finger fold. A disordered region spans residues 115 to 149 (AKQHLDPHRNGETKADDSSNKEAAEEKQEEDGDYH). The segment covering 117-140 (QHLDPHRNGETKADDSSNKEAAEE) has biased composition (basic and acidic residues). The segment at 132-242 (SSNKEAAEEK…LHYRPKMDLL (111 aa)) is interaction with BCORL1.

Component of a PRC1-like complex that contains PCGF3, RNF2 and RYBP. Interacts with CBX6, CBX7 and CBX8. Interacts with BCORL1.

It is found in the nucleus. It localises to the nucleoplasm. In terms of biological role, component of a Polycomb group (PcG) multiprotein PRC1-like complex, a complex class required to maintain the transcriptionally repressive state of many genes, including Hox genes, throughout development. PcG PRC1 complex acts via chromatin remodeling and modification of histones; it mediates monoubiquitination of histone H2A 'Lys-119', rendering chromatin heritably changed in its expressibility. Within the PRC1-like complex, regulates RNF2 ubiquitin ligase activity. Plays a redundant role with PCGF5 as part of a PRC1-like complex that mediates monoubiquitination of histone H2A 'Lys-119' on the X chromosome and is required for normal silencing of one copy of the X chromosome in XX females. The sequence is that of Polycomb group RING finger protein 3 (PCGF3) from Bos taurus (Bovine).